A 401-amino-acid chain; its full sequence is tRNA(Ile)-lysidine synthase (401 aa).

17–22 (SGGPDS) provides a ligand contact to ATP.

Belongs to the tRNA(Ile)-lysidine synthase family.

It localises to the cytoplasm. It catalyses the reaction cytidine(34) in tRNA(Ile2) + L-lysine + ATP = lysidine(34) in tRNA(Ile2) + AMP + diphosphate + H(+). Its function is as follows. Ligates lysine onto the cytidine present at position 34 of the AUA codon-specific tRNA(Ile) that contains the anticodon CAU, in an ATP-dependent manner. Cytidine is converted to lysidine, thus changing the amino acid specificity of the tRNA from methionine to isoleucine. The protein is tRNA(Ile)-lysidine synthase of Mycoplasma mycoides subsp. mycoides SC (strain CCUG 32753 / NCTC 10114 / PG1).